The primary structure comprises 481 residues: PRAME family member 22 (481 aa).

One copy of the LRR 1; degenerate repeat lies at 99-126; that stretch reads RWKLQVLELRDVDENFWTIWSGARPLSC. The stretch at 181-205 is one LRR 2; degenerate repeat; sequence HLCCTKVVNYSMSILNFRNILETVY. The LRR 3; degenerate repeat unit spans residues 206–232; sequence PDSIQVLEIWNMCWPCMIVEFSRYLSQ. One copy of the LRR 4; degenerate repeat lies at 233-267; it reads MRNLRKLFISDGCRYLLSSDSQEQLVAEFSSVLLR. 5 LRR repeats span residues 268–293, 294–325, 326–344, 350–377, and 378–402; these read LEYLQMLYVRRVCFFRGHLDQLIRCL, RSPLETLALTYGFLEKVDLKCLPRYPSLSQLK, QLNLSHGALRFIRLEPLRA, AATLQTLFLVDCGIRDSKLRVILPALSC, and CSNLTTFCFHGNDTSMDGLKDLLRH.

Belongs to the PRAME family.

The sequence is that of PRAME family member 22 from Homo sapiens (Human).